Reading from the N-terminus, the 427-residue chain is Phosphatidylserine decarboxylase proenzyme 1, mitochondrial (427 aa).

A mitochondrion-targeting transit peptide spans 1-77 (MRSYLRFSDR…RRFVYKLDQA (77 aa)). The Mitochondrial matrix segment spans residues 78-88 (VTAALGPNGRY). Residues 89–107 (IAMVGMTASAVLLTFHYKF) form a helical membrane-spanning segment. Residues 108 to 427 (REVIAATDNV…TEDERLFAFY (320 aa)) lie on the Mitochondrial intermembrane side of the membrane. Catalysis depends on charge relay system; for autoendoproteolytic cleavage activity residues aspartate 210, histidine 268, and serine 379. Catalysis depends on serine 379, which acts as the Schiff-base intermediate with substrate; via pyruvic acid; for decarboxylase activity. Serine 379 is subject to Pyruvic acid (Ser); by autocatalysis.

Belongs to the phosphatidylserine decarboxylase family. PSD-B subfamily. Eukaryotic type I sub-subfamily. Heterodimer of a large membrane-associated beta subunit and a small pyruvoyl-containing alpha subunit. It depends on pyruvate as a cofactor. Is synthesized initially as an inactive proenzyme. Formation of the active enzyme involves a self-maturation process in which the active site pyruvoyl group is generated from an internal serine residue via an autocatalytic post-translational modification. Two non-identical subunits are generated from the proenzyme in this reaction, and the pyruvate is formed at the N-terminus of the alpha chain, which is derived from the carboxyl end of the proenzyme. The autoendoproteolytic cleavage occurs by a canonical serine protease mechanism, in which the side chain hydroxyl group of the serine supplies its oxygen atom to form the C-terminus of the beta chain, while the remainder of the serine residue undergoes an oxidative deamination to produce ammonia and the pyruvoyl prosthetic group on the alpha chain. During this reaction, the Ser that is part of the protease active site of the proenzyme becomes the pyruvoyl prosthetic group, which constitutes an essential element of the active site of the mature decarboxylase.

The protein resides in the mitochondrion. The protein localises to the mitochondrion inner membrane. It catalyses the reaction a 1,2-diacyl-sn-glycero-3-phospho-L-serine + H(+) = a 1,2-diacyl-sn-glycero-3-phosphoethanolamine + CO2. It participates in phospholipid metabolism; phosphatidylethanolamine biosynthesis; phosphatidylethanolamine from CDP-diacylglycerol: step 2/2. Catalyzes the formation of phosphatidylethanolamine (PtdEtn) from phosphatidylserine (PtdSer). Plays a central role in phospholipid metabolism and in the interorganelle trafficking of phosphatidylserine. In Toxoplasma gondii (strain ATCC 50853 / GT1), this protein is Phosphatidylserine decarboxylase proenzyme 1, mitochondrial.